The sequence spans 128 residues: Sulfurtransferase TusD (128 aa).

Cysteine 78 acts as the Cysteine persulfide intermediate in catalysis.

Belongs to the DsrE/TusD family. As to quaternary structure, heterohexamer, formed by a dimer of trimers. The hexameric TusBCD complex contains 2 copies each of TusB, TusC and TusD. The TusBCD complex interacts with TusE.

The protein resides in the cytoplasm. In terms of biological role, part of a sulfur-relay system required for 2-thiolation of 5-methylaminomethyl-2-thiouridine (mnm(5)s(2)U) at tRNA wobble positions. Accepts sulfur from TusA and transfers it in turn to TusE. This Buchnera aphidicola subsp. Schizaphis graminum (strain Sg) protein is Sulfurtransferase TusD.